Consider the following 217-residue polypeptide: Ras-related protein RGP2 (217 aa).

GTP contacts are provided by residues 19-26 (GDSGVGKS), 67-71 (DTAGQ), and 125-128 (NKSD). Residues C214 and C215 are each lipidated (S-geranylgeranyl cysteine).

It belongs to the small GTPase superfamily. Rab family.

It is found in the cell membrane. The polypeptide is Ras-related protein RGP2 (RGP2) (Oryza sativa subsp. japonica (Rice)).